A 410-amino-acid polypeptide reads, in one-letter code: Arginine deiminase (410 aa).

The active-site Amidino-cysteine intermediate is cysteine 399.

The protein belongs to the arginine deiminase family.

It is found in the cytoplasm. The enzyme catalyses L-arginine + H2O = L-citrulline + NH4(+). The protein operates within amino-acid degradation; L-arginine degradation via ADI pathway; carbamoyl phosphate from L-arginine: step 1/2. This Listeria monocytogenes serotype 4a (strain HCC23) protein is Arginine deiminase.